The following is a 433-amino-acid chain: Trigger factor (433 aa).

The PPIase FKBP-type domain occupies 163-248 (GDFVTFDFKG…IKEIKVKELP (86 aa)).

This sequence belongs to the FKBP-type PPIase family. Tig subfamily.

The protein resides in the cytoplasm. It catalyses the reaction [protein]-peptidylproline (omega=180) = [protein]-peptidylproline (omega=0). In terms of biological role, involved in protein export. Acts as a chaperone by maintaining the newly synthesized protein in an open conformation. Functions as a peptidyl-prolyl cis-trans isomerase. In Geotalea uraniireducens (strain Rf4) (Geobacter uraniireducens), this protein is Trigger factor.